The sequence spans 1089 residues: Pentatricopeptide repeat-containing protein MRL1, chloroplastic (1089 aa).

The N-terminal 72 residues, 1–72, are a transit peptide targeting the chloroplast; it reads MEVTSTTFIS…SIRSPRLVVR (72 aa). PPR repeat units follow at residues 466–500, 501–535, 536–570, 571–605, 608–642, 643–677, 678–712, 713–747, 748–782, and 783–817; these read TMST…GMTA, DCKL…GVEA, NLHT…NVKP, DRVV…THPI, DHIS…GIRG, TPEV…DVTP, DEVF…GIRL, GTIS…KLRP, TIST…GLKP, and NTIT…GVSP.

The protein belongs to the PPR family. P subfamily. In terms of tissue distribution, expressed in stems, leaves and sepals.

It is found in the plastid. It localises to the chloroplast. Its function is as follows. Regulator of the large subunit (LS) of RuBisCO. Involved either in the processing or in the stabilization of the processed transcript, probably by acting as a barrier to the 5'&gt;3' degradation. The polypeptide is Pentatricopeptide repeat-containing protein MRL1, chloroplastic (MRL1) (Arabidopsis thaliana (Mouse-ear cress)).